A 433-amino-acid polypeptide reads, in one-letter code: Succinate--CoA ligase [ADP-forming] subunit beta, mitochondrial (433 aa).

Residues 1–23 (MLTRSVLRKAPRAFSPFLQKRNL) constitute a mitochondrion transit peptide. In terms of domain architecture, ATP-grasp spans 31 to 273 (HDILRKFGVD…ISQEDPDEAR (243 aa)). ATP is bound by residues K68, 75–77 (GRG), and E136. Mg(2+) contacts are provided by N228 and D242. Substrate is bound by residues N293 and 350–352 (GIV).

Belongs to the succinate/malate CoA ligase beta subunit family. As to quaternary structure, heterodimer of an alpha and a beta subunit. It depends on Mg(2+) as a cofactor.

Its subcellular location is the mitochondrion. It carries out the reaction succinate + ATP + CoA = succinyl-CoA + ADP + phosphate. The protein operates within carbohydrate metabolism; tricarboxylic acid cycle; succinate from succinyl-CoA (ligase route): step 1/1. Its function is as follows. Succinyl-CoA synthetase functions in the citric acid cycle (TCA), coupling the hydrolysis of succinyl-CoA to the synthesis of ATP and thus represents the only step of substrate-level phosphorylation in the TCA. The beta subunit provides nucleotide specificity of the enzyme and binds the substrate succinate, while the binding sites for coenzyme A and phosphate are found in the alpha subunit. The sequence is that of Succinate--CoA ligase [ADP-forming] subunit beta, mitochondrial from Schizosaccharomyces pombe (strain 972 / ATCC 24843) (Fission yeast).